Here is a 210-residue protein sequence, read N- to C-terminus: uncharacterized protein (210 aa).

The Fe2OG dioxygenase domain occupies 90–193 (KPDQIIVNEY…RISITFRNVI (104 aa)).

This is an uncharacterized protein from Acanthamoeba polyphaga (Amoeba).